The primary structure comprises 257 residues: Ribosomal RNA small subunit methyltransferase J (257 aa).

S-adenosyl-L-methionine is bound by residues 109–110 (RD), 125–126 (ER), and Asp-179.

Belongs to the methyltransferase superfamily. RsmJ family.

Its subcellular location is the cytoplasm. It catalyses the reaction guanosine(1516) in 16S rRNA + S-adenosyl-L-methionine = N(2)-methylguanosine(1516) in 16S rRNA + S-adenosyl-L-homocysteine + H(+). In terms of biological role, specifically methylates the guanosine in position 1516 of 16S rRNA. This is Ribosomal RNA small subunit methyltransferase J from Actinobacillus succinogenes (strain ATCC 55618 / DSM 22257 / CCUG 43843 / 130Z).